The primary structure comprises 208 residues: Ribonuclease HII (208 aa).

Residues 11–203 (GPVAGVDEAG…VAAAHEQWLK (193 aa)) form the RNase H type-2 domain. A divalent metal cation is bound by residues Asp17, Glu18, and Asp112.

The protein belongs to the RNase HII family. Mn(2+) is required as a cofactor. It depends on Mg(2+) as a cofactor.

The protein localises to the cytoplasm. The catalysed reaction is Endonucleolytic cleavage to 5'-phosphomonoester.. Endonuclease that specifically degrades the RNA of RNA-DNA hybrids. The sequence is that of Ribonuclease HII from Corynebacterium jeikeium (strain K411).